We begin with the raw amino-acid sequence, 404 residues long: Homoserine O-succinyltransferase (404 aa).

Low complexity predominate over residues 1–25 (MTDIQADPAVTAADAAQADTSSPTA). Residues 1–30 (MTDIQADPAVTAADAAQADTSSPTAHQGKP) are disordered. One can recognise an AB hydrolase-1 domain in the interval 75–384 (NAVLICHALN…HGHDAFLLED (310 aa)). Ser-179 (nucleophile) is an active-site residue. Arg-249 contributes to the substrate binding site. Active-site residues include Asp-344 and His-377. Position 378 (Asp-378) interacts with substrate.

It belongs to the AB hydrolase superfamily. MetX family. In terms of assembly, homodimer.

Its subcellular location is the cytoplasm. The enzyme catalyses L-homoserine + succinyl-CoA = O-succinyl-L-homoserine + CoA. It functions in the pathway amino-acid biosynthesis; L-methionine biosynthesis via de novo pathway; O-succinyl-L-homoserine from L-homoserine: step 1/1. Functionally, transfers a succinyl group from succinyl-CoA to L-homoserine, forming succinyl-L-homoserine. The sequence is that of Homoserine O-succinyltransferase from Ralstonia pickettii (strain 12J).